We begin with the raw amino-acid sequence, 1050 residues long: Sucrose-phosphate synthase 4 (1050 aa).

Residues 134–167 (QGRNDAEEDLLSELSEGEKDKNDGEKEKSEVVTT) form a disordered region. A Phosphoserine modification is found at serine 148. Basic and acidic residues predominate over residues 149 to 163 (EGEKDKNDGEKEKSE). Serine 180 is modified (phosphoserine).

It belongs to the glycosyltransferase 1 family. In terms of assembly, homodimer or homotetramer.

The enzyme catalyses beta-D-fructose 6-phosphate + UDP-alpha-D-glucose = sucrose 6(F)-phosphate + UDP + H(+). It participates in glycan biosynthesis; sucrose biosynthesis; sucrose from D-fructose 6-phosphate and UDP-alpha-D-glucose: step 1/2. Its activity is regulated as follows. Activity is regulated by phosphorylation and moderated by concentration of metabolites and light. Functionally, plays a role in photosynthetic sucrose synthesis by catalyzing the rate-limiting step of sucrose biosynthesis from UDP-glucose and fructose- 6-phosphate. Involved in the regulation of carbon partitioning in the leaves of plants. May regulate the synthesis of sucrose and therefore play a major role as a limiting factor in the export of photoassimilates out of the leaf. Plays a role for sucrose availability that is essential for plant growth and fiber elongation. This is Sucrose-phosphate synthase 4 from Arabidopsis thaliana (Mouse-ear cress).